Reading from the N-terminus, the 125-residue chain is Small ribosomal subunit protein uS12 (125 aa).

A disordered region spans residues 1–28 (MPTISQLIGSERKRLTRKTKSPALKSCP). At D89 the chain carries 3-methylthioaspartic acid. Positions 104 to 125 (TAGVKDRRQSRSKYGAKAPKND) are disordered.

The protein belongs to the universal ribosomal protein uS12 family. In terms of assembly, part of the 30S ribosomal subunit. Contacts proteins S8 and S17. May interact with IF1 in the 30S initiation complex.

With S4 and S5 plays an important role in translational accuracy. In terms of biological role, interacts with and stabilizes bases of the 16S rRNA that are involved in tRNA selection in the A site and with the mRNA backbone. Located at the interface of the 30S and 50S subunits, it traverses the body of the 30S subunit contacting proteins on the other side and probably holding the rRNA structure together. The combined cluster of proteins S8, S12 and S17 appears to hold together the shoulder and platform of the 30S subunit. The chain is Small ribosomal subunit protein uS12 from Prochlorococcus marinus subsp. pastoris (strain CCMP1986 / NIES-2087 / MED4).